The chain runs to 237 residues: MRFDVITLFPEMFSALTESGVSRRAYQDQLYQFKTWNPRTYTTDRHKTVDDRPYGGGPGMLMMYPPLKKTVDAITDEVGEKPYVVYLSPQGRPLTQQKLSELQSHSNVTLVCGRYEGIDERFIETVVDEEICVGDFIVSGGELPAMMLMDGMIRLIPGALGHNQSAEQDSFSDGLLDCPHYTRPVEVDGMGVPEVLQEGHHAKIEQWRHEQKLLRTKQKRPDLYTAYLAKHTETQDK.

Residues Gly113 and Val133–Val138 each bind S-adenosyl-L-methionine.

It belongs to the RNA methyltransferase TrmD family. As to quaternary structure, homodimer.

It localises to the cytoplasm. It catalyses the reaction guanosine(37) in tRNA + S-adenosyl-L-methionine = N(1)-methylguanosine(37) in tRNA + S-adenosyl-L-homocysteine + H(+). In terms of biological role, specifically methylates guanosine-37 in various tRNAs. This Hydrogenovibrio crunogenus (strain DSM 25203 / XCL-2) (Thiomicrospira crunogena) protein is tRNA (guanine-N(1)-)-methyltransferase.